We begin with the raw amino-acid sequence, 136 residues long: Nucleoside diphosphate kinase (136 aa).

Residues Lys10, Phe58, Arg86, Thr92, Arg104, and Asn114 each contribute to the ATP site. His117 serves as the catalytic Pros-phosphohistidine intermediate.

Belongs to the NDK family. Homotetramer. The cofactor is Mg(2+).

The protein localises to the cytoplasm. It catalyses the reaction a 2'-deoxyribonucleoside 5'-diphosphate + ATP = a 2'-deoxyribonucleoside 5'-triphosphate + ADP. It carries out the reaction a ribonucleoside 5'-diphosphate + ATP = a ribonucleoside 5'-triphosphate + ADP. Major role in the synthesis of nucleoside triphosphates other than ATP. The ATP gamma phosphate is transferred to the NDP beta phosphate via a ping-pong mechanism, using a phosphorylated active-site intermediate. In Saccharopolyspora erythraea (strain ATCC 11635 / DSM 40517 / JCM 4748 / NBRC 13426 / NCIMB 8594 / NRRL 2338), this protein is Nucleoside diphosphate kinase.